Consider the following 413-residue polypeptide: Variant surface glycoprotein YnAT 1.3 (413 aa).

The first 22 residues, 1-22 (MLDNSRARSIVHLLILLKAHVI), serve as a signal peptide directing secretion. N-linked (GlcNAc...) asparagine glycosylation is found at Asn-91, Asn-361, and Asn-379. Asn-379 carries GPI-anchor amidated asparagine lipidation. A propeptide spans 380 to 413 (SSNPTSRQNSVVQEPTTVSAAAITPLILPWTLLI) (removed in mature form).

The protein localises to the cell membrane. Its function is as follows. VSG forms a coat on the surface of the parasite. The trypanosome evades the immune response of the host by expressing a series of antigenically distinct VSGs from an estimated 1000 VSG genes. This chain is Variant surface glycoprotein YnAT 1.3, found in Trypanosoma congolense.